Here is a 180-residue protein sequence, read N- to C-terminus: GTP cyclohydrolase 1 (180 aa).

Zn(2+) contacts are provided by Cys-71, His-74, and Cys-142.

It belongs to the GTP cyclohydrolase I family. Toroid-shaped homodecamer, composed of two pentamers of five dimers.

It catalyses the reaction GTP + H2O = 7,8-dihydroneopterin 3'-triphosphate + formate + H(+). It participates in cofactor biosynthesis; 7,8-dihydroneopterin triphosphate biosynthesis; 7,8-dihydroneopterin triphosphate from GTP: step 1/1. In Helicobacter pylori (strain HPAG1), this protein is GTP cyclohydrolase 1.